Reading from the N-terminus, the 211-residue chain is Thymidylate kinase (211 aa).

10–17 serves as a coordination point for ATP; the sequence is GLDGSGKT.

The protein belongs to the thymidylate kinase family.

It catalyses the reaction dTMP + ATP = dTDP + ADP. In terms of biological role, phosphorylation of dTMP to form dTDP in both de novo and salvage pathways of dTTP synthesis. In Blochmanniella floridana, this protein is Thymidylate kinase.